We begin with the raw amino-acid sequence, 356 residues long: MPRIEFEPKLDFKDVLLRPKRSTLRSRAEVDLMREYVFRNSKKTYVGVPVVASNMDTVGTFEMAEVLAKFSLFTTIHKHYQVDEWKAFVQRVDSNPQIMSQIGISSGISTSDFDKLRTVCDMIPELEYICLDVANGYSEVFVDFIRRVREQFPTHTIFAGNVVTGEMVEELILSGADVVKVGIGPGSVCTTRKKAGVGYPQLSAVLECADASHGLNGHVMSDGGCTNPGDVAKAFGGGADFVMIGGLLAGHDQCGGEVVEKDGKKYKLFYGMSSDTAMKKYQGSVAEYRASEGKTIYMPYRGDVSRTIHDLLGGLRSACTYIGATKLKELSKRATFVRVTQQTNDQYSAYEVPRID.

Residues 26 to 27, lysine 78, 132 to 134, and 183 to 184 contribute to the NADP(+) site; these read SR, DVA, and IG. Residues glycine 184, glycine 186, and cysteine 189 each coordinate K(+). Cysteine 189 functions as the Thioimidate intermediate in the catalytic mechanism. Residue threonine 191 is the Proton donor/acceptor of the active site. K(+) is bound at residue arginine 192. Residues 222 to 224, 245 to 246, 271 to 273, and 289 to 293 each bind GMP; these read DGG, GG, GMS, and RASEG. Residues methionine 272, 288–289, and 317–320 each bind NADP(+); these read YR and SACT.

Belongs to the IMPDH/GMPR family.

The enzyme catalyses IMP + NH4(+) + NADP(+) = GMP + NADPH + 2 H(+). In terms of biological role, catalyzes the irreversible NADPH-dependent deamination of GMP to IMP. It functions in the conversion of nucleobase, nucleoside and nucleotide derivatives of G to A nucleotides, and in maintaining the intracellular balance of A and G nucleotides. In Ascaris suum (Pig roundworm), this protein is GMP reductase.